The chain runs to 362 residues: Large ribosomal subunit protein uL4A (362 aa).

Serine 2 bears the N-acetylserine mark. At arginine 95 the chain carries Omega-N-methylarginine. The C-terminal-extended nuclear localization signal stretch occupies residues 277–362 (PSHIISTSDV…AVFTETLKHD (86 aa)).

It belongs to the universal ribosomal protein uL4 family. As to quaternary structure, component of the large ribosomal subunit (LSU). Mature yeast ribosomes consist of a small (40S) and a large (60S) subunit. The 40S small subunit contains 1 molecule of ribosomal RNA (18S rRNA) and 33 different proteins (encoded by 57 genes). The large 60S subunit contains 3 rRNA molecules (25S, 5.8S and 5S rRNA) and 46 different proteins (encoded by 81 genes). uL4 is associated with the polypeptide exit tunnel. uL4 interacts with its chaperone ACL4 and the nuclear import receptor KAP104. Post-translationally, N-terminally acetylated by acetyltransferase NatA.

The protein localises to the cytoplasm. The protein resides in the nucleus. Functionally, component of the ribosome, a large ribonucleoprotein complex responsible for the synthesis of proteins in the cell. The small ribosomal subunit (SSU) binds messenger RNAs (mRNAs) and translates the encoded message by selecting cognate aminoacyl-transfer RNA (tRNA) molecules. The large subunit (LSU) contains the ribosomal catalytic site termed the peptidyl transferase center (PTC), which catalyzes the formation of peptide bonds, thereby polymerizing the amino acids delivered by tRNAs into a polypeptide chain. The nascent polypeptides leave the ribosome through a tunnel in the LSU and interact with protein factors that function in enzymatic processing, targeting, and the membrane insertion of nascent chains at the exit of the ribosomal tunnel. uL4 participates in the regulation of the accumulation of its own mRNA. This chain is Large ribosomal subunit protein uL4A, found in Saccharomyces cerevisiae (strain ATCC 204508 / S288c) (Baker's yeast).